The following is a 103-amino-acid chain: Large ribosomal subunit protein bL21 (103 aa).

The protein belongs to the bacterial ribosomal protein bL21 family. Part of the 50S ribosomal subunit. Contacts protein L20.

Its function is as follows. This protein binds to 23S rRNA in the presence of protein L20. This is Large ribosomal subunit protein bL21 from Mycobacterium leprae (strain Br4923).